Consider the following 155-residue polypeptide: Small ribosomal subunit protein uS7 (155 aa).

It belongs to the universal ribosomal protein uS7 family. Part of the 30S ribosomal subunit. Contacts proteins S9 and S11.

One of the primary rRNA binding proteins, it binds directly to 16S rRNA where it nucleates assembly of the head domain of the 30S subunit. Is located at the subunit interface close to the decoding center, probably blocks exit of the E-site tRNA. The polypeptide is Small ribosomal subunit protein uS7 (Chlorobium phaeobacteroides (strain BS1)).